The primary structure comprises 132 residues: Transcription antitermination protein NusB (132 aa).

Belongs to the NusB family.

Its function is as follows. Involved in transcription antitermination. Required for transcription of ribosomal RNA (rRNA) genes. Binds specifically to the boxA antiterminator sequence of the ribosomal RNA (rrn) operons. The polypeptide is Transcription antitermination protein NusB (Campylobacter lari (strain RM2100 / D67 / ATCC BAA-1060)).